The chain runs to 691 residues: Elongation factor G (691 aa).

Residues 8-282 (NKTRNIGIMA…AVVEFLPAPV (275 aa)) enclose the tr-type G domain. GTP contacts are provided by residues 17–24 (AHIDAGKT), 81–85 (DTPGH), and 135–138 (NKMD).

Belongs to the TRAFAC class translation factor GTPase superfamily. Classic translation factor GTPase family. EF-G/EF-2 subfamily.

The protein localises to the cytoplasm. In terms of biological role, catalyzes the GTP-dependent ribosomal translocation step during translation elongation. During this step, the ribosome changes from the pre-translocational (PRE) to the post-translocational (POST) state as the newly formed A-site-bound peptidyl-tRNA and P-site-bound deacylated tRNA move to the P and E sites, respectively. Catalyzes the coordinated movement of the two tRNA molecules, the mRNA and conformational changes in the ribosome. This Heliobacterium modesticaldum (strain ATCC 51547 / Ice1) protein is Elongation factor G.